A 173-amino-acid chain; its full sequence is Co-chaperone protein HscB homolog (173 aa).

A J domain is found at 5-77 (CHFALFDLQP…SQRARYLLAL (73 aa)).

The protein belongs to the HscB family. Interacts with HscA and stimulates its ATPase activity.

Co-chaperone involved in the maturation of iron-sulfur cluster-containing proteins. Seems to help targeting proteins to be folded toward HscA. The chain is Co-chaperone protein HscB homolog from Ectopseudomonas mendocina (strain ymp) (Pseudomonas mendocina).